The sequence spans 417 residues: Neuropeptide FF receptor 2 (417 aa).

Topologically, residues 1-45 (MGKRWDSNSSGSWDHIWSGNDTQHPWYSDINITYMNYYLHQPHVT) are extracellular. N8, N20, and N31 each carry an N-linked (GlcNAc...) asparagine glycan. Residues 46 to 66 (AVFISSYFLIFFLCMVGNTVV) traverse the membrane as a helical segment. The Cytoplasmic portion of the chain corresponds to 67–82 (CFVVIRNRYMHTVTNF). Residues 83-103 (FIFNLAISDLLVGIFCMPITL) traverse the membrane as a helical segment. Residues 104-119 (LDNIIAGWPFGSSMCK) lie on the Extracellular side of the membrane. An intrachain disulfide couples C118 to C206. Residues 120–140 (ISGLVQGISVAASVFTLVAIA) form a helical membrane-spanning segment. At 141–160 (VDRFRCVVYPFKPKLTVKTA) the chain is on the cytoplasmic side. Residues 161 to 181 (FVMIVIIWGLAITIMTPSAIM) form a helical membrane-spanning segment. Topologically, residues 182–217 (LHVQEEKYYRVRLSSHNKTSTVYWCREDWPNQEMRR) are extracellular. Residue N198 is glycosylated (N-linked (GlcNAc...) asparagine). The helical transmembrane segment at 218-238 (IYTTVLFATIYLAPLSLIVIM) threads the bilayer. Residues 239–274 (YARIGASLFKTSAHSTGKQRLEQWHVSKKKQKVIKM) are Cytoplasmic-facing. A helical transmembrane segment spans residues 275–295 (LLTVALLFILSWLPLWTLMML). The Extracellular segment spans residues 296–310 (SDYADLSPNKLRVIN). The chain crosses the membrane as a helical span at residues 311–331 (IYVYPFAHWLAFCNSSVNPII). The Cytoplasmic segment spans residues 332 to 417 (YGFFNENFRS…TGEATNSTET (86 aa)). Residues 378-417 (HEPASQNPSGENLGCRKSADNPTQESLMEETGEATNSTET) are disordered.

Belongs to the G-protein coupled receptor 1 family.

The protein resides in the cell membrane. Its function is as follows. Receptor for NPAF (A-18-F-amide) and NPFF (F-8-F-amide) neuropeptides, also known as morphine-modulating peptides. Can also be activated by a variety of naturally occurring or synthetic FMRF-amide like ligands. This receptor mediates its action by association with G proteins that activate a phosphatidylinositol-calcium second messenger system. The chain is Neuropeptide FF receptor 2 (Npffr2) from Rattus norvegicus (Rat).